We begin with the raw amino-acid sequence, 187 residues long: Probable GTP-binding protein EngB (187 aa).

In terms of domain architecture, EngB-type G spans 18 to 187; it reads KNSEIAFWGR…KLKENINSNF (170 aa). Residues 26 to 33, 52 to 56, 70 to 73, 137 to 140, and 168 to 170 contribute to the GTP site; these read GRSNVGKS, GRTQL, DLPG, TKID, and VSS. Serine 33 and threonine 54 together coordinate Mg(2+).

It belongs to the TRAFAC class TrmE-Era-EngA-EngB-Septin-like GTPase superfamily. EngB GTPase family. The cofactor is Mg(2+).

Its function is as follows. Necessary for normal cell division and for the maintenance of normal septation. This chain is Probable GTP-binding protein EngB, found in Mycoplasmopsis synoviae (strain 53) (Mycoplasma synoviae).